Reading from the N-terminus, the 604-residue chain is uncharacterized protein (604 aa).

Positions 1 to 19 (MIVRILLLFIALFTFGVQA) are cleaved as a signal peptide.

To H.influenzae HbpA.

This is an uncharacterized protein from Escherichia coli (strain K12).